Consider the following 151-residue polypeptide: Large ribosomal subunit protein bL9 (151 aa).

The protein belongs to the bacterial ribosomal protein bL9 family.

Functionally, binds to the 23S rRNA. In Nitrosomonas europaea (strain ATCC 19718 / CIP 103999 / KCTC 2705 / NBRC 14298), this protein is Large ribosomal subunit protein bL9.